The primary structure comprises 258 residues: 5-oxoprolinase subunit A 2 (258 aa).

Belongs to the LamB/PxpA family. Forms a complex composed of PxpA, PxpB and PxpC.

It carries out the reaction 5-oxo-L-proline + ATP + 2 H2O = L-glutamate + ADP + phosphate + H(+). Functionally, catalyzes the cleavage of 5-oxoproline to form L-glutamate coupled to the hydrolysis of ATP to ADP and inorganic phosphate. The chain is 5-oxoprolinase subunit A 2 from Pseudomonas putida (strain ATCC 47054 / DSM 6125 / CFBP 8728 / NCIMB 11950 / KT2440).